A 435-amino-acid polypeptide reads, in one-letter code: Astacin-like metalloendopeptidase (435 aa).

The first 23 residues, 1–23 (MGIMGSLWPWILTMLSLLGLSMG), serve as a signal peptide directing secretion. The Peptidase M12A domain occupies 85 to 282 (RLLSVTNNKW…TRVCRLYNCS (198 aa)). Intrachain disulfides connect Cys-132/Cys-281 and Cys-153/Cys-172. Residue His-182 participates in Zn(2+) binding. Glu-183 is an active-site residue. Positions 186 and 192 each coordinate Zn(2+). A compositionally biased stretch (low complexity) spans 318–329 (SEESGSSAPSGS). Positions 318-356 (SEESGSSAPSGSRTGGQSIAGLGNSQQGWEHPPQSTFSV) are disordered. The segment covering 340 to 355 (GNSQQGWEHPPQSTFS) has biased composition (polar residues).

As to quaternary structure, interacts (via N-terminal domain) with SPACA3; the interaction occurs during fertilization. Zn(2+) is required as a cofactor. Ovary-specific. Expressed in secondary, antral and Graafian follicle oocytes. Expressed in the egg cells. Not detected in two-cell embryos. Not detected in naked oocytes, oocytes in primordial or unilaminar primary follicles, or in any other ovarian cells at pre-pubertal, pubertal or adult stages (at protein level). Ovary-specific.

The protein localises to the cytoplasm. It localises to the cell membrane. The protein resides in the cytoplasmic vesicle. It is found in the secretory vesicle. Its subcellular location is the cortical granule. With respect to regulation, inhibited by wide spectrum metalloproteinase inhibitor batimastat (BB-94). Also inhibited by EDTA. Its function is as follows. Oocyte-specific oolemmal receptor involved in sperm and egg adhesion and fertilization. Plays a role in the polyspermy inhibition. Probably acts as a protease for the post-fertilization cleavage of ZP2. Cleaves the sperm-binding ZP2 at the surface of the zona pellucida after fertilization and cortical granule exocytosis, rendering the zona pellucida unable to support further sperm binding. The chain is Astacin-like metalloendopeptidase from Mus musculus (Mouse).